Consider the following 116-residue polypeptide: UPF0122 protein CA_C1753 (116 aa).

Belongs to the UPF0122 family.

Functionally, might take part in the signal recognition particle (SRP) pathway. This is inferred from the conservation of its genetic proximity to ftsY/ffh. May be a regulatory protein. The chain is UPF0122 protein CA_C1753 from Clostridium acetobutylicum (strain ATCC 824 / DSM 792 / JCM 1419 / IAM 19013 / LMG 5710 / NBRC 13948 / NRRL B-527 / VKM B-1787 / 2291 / W).